The primary structure comprises 459 residues: cAMP-dependent protein kinase regulatory subunit (459 aa).

Positions 30–219 (QFCANYFNTK…TLANNLKNNF (190 aa)) are dimerization and phosphorylation. Disordered regions lie at residues 78-109 (VNDRQPSFKSPFGVNDPHSNHDEDPHAKDTKT) and 125-168 (FDVK…PSSK). Residues 95-109 (HSNHDEDPHAKDTKT) are compositionally biased toward basic and acidic residues. Over residues 146–168 (KPSSSSQPNQQSASASSKTPSSK) the composition is skewed to low complexity. Position 180 is a phosphoserine (Ser-180). 3',5'-cyclic AMP contacts are provided by residues 220–335 (LFKQ…FLKD), Glu-285, Arg-294, 338–454 (VLKS…KSQD), Glu-404, and Arg-413.

The protein belongs to the cAMP-dependent kinase regulatory chain family. Tetramer, composed of 2 regulatory (R) and 2 catalytic (C) subunits. In the presence of cAMP it dissociates into 2 active monomeric C subunits and an R dimer.

In Candida albicans (strain SC5314 / ATCC MYA-2876) (Yeast), this protein is cAMP-dependent protein kinase regulatory subunit (BCY1).